Here is a 586-residue protein sequence, read N- to C-terminus: A-type ATP synthase subunit A (586 aa).

233–240 (GPFGSGKT) lines the ATP pocket.

The protein belongs to the ATPase alpha/beta chains family. In terms of assembly, has multiple subunits with at least A(3), B(3), C, D, E, F, H, I and proteolipid K(x).

It is found in the cell membrane. It carries out the reaction ATP + H2O + 4 H(+)(in) = ADP + phosphate + 5 H(+)(out). Its function is as follows. Component of the A-type ATP synthase that produces ATP from ADP in the presence of a proton gradient across the membrane. The A chain is the catalytic subunit. The chain is A-type ATP synthase subunit A from Methanococcus aeolicus (strain ATCC BAA-1280 / DSM 17508 / OCM 812 / Nankai-3).